The following is a 117-amino-acid chain: Iron-sulfur cluster insertion protein ErpA (117 aa).

The iron-sulfur cluster site is built by Cys45, Cys109, and Cys111.

Belongs to the HesB/IscA family. As to quaternary structure, homodimer. Iron-sulfur cluster is required as a cofactor.

Its function is as follows. Required for insertion of 4Fe-4S clusters for at least IspG. The sequence is that of Iron-sulfur cluster insertion protein ErpA from Ruthia magnifica subsp. Calyptogena magnifica.